Here is a 247-residue protein sequence, read N- to C-terminus: MGKRDNRVAYMNPIAMARSRGPIQSSGPTIQDYLNRPRPTWEEVKEQLEKKKKGSKALAEFEEKMNENWKKELEKHREKLLSGSESSSKKRQRKKKEKKKSGRYSSSSSSSSDSSSSSSDSEDEDKKQGKRRKKKKNRSHKSSESSMSETESDSKDSLKKKKKSKDGTEKEKDIKGLSKKRKMYSEDKPLSSESLSESEYIEEVRAKKKKSSEEREKATEKTKKKKKHKKHSKKKKKKAASSSPDSP.

Disordered stretches follow at residues 19–38 (SRGP…NRPR) and 70–247 (KKEL…PDSP). A compositionally biased stretch (basic and acidic residues) spans 70–80 (KKELEKHREKL). Ser-82 carries the phosphoserine modification. A compositionally biased stretch (basic residues) spans 89–102 (KKRQRKKKEKKKSG). Over residues 103–119 (RYSSSSSSSSDSSSSSS) the composition is skewed to low complexity. Basic residues predominate over residues 128-140 (QGKRRKKKKNRSH). Residues 165-176 (KDGTEKEKDIKG) show a composition bias toward basic and acidic residues. Residues Ser-191, Ser-192, Ser-194, and Ser-196 each carry the phosphoserine modification. Residues 211 to 221 (SSEEREKATEK) are compositionally biased toward basic and acidic residues. Over residues 222-239 (TKKKKKHKKHSKKKKKKA) the composition is skewed to basic residues.

Belongs to the FAM133 family.

This chain is Protein FAM133B (FAM133B), found in Homo sapiens (Human).